The sequence spans 141 residues: Putative antiporter subunit mnhB2 (141 aa).

Helical transmembrane passes span 10–30 (TVTK…FFAG), 35–55 (GGGF…FLAF), 70–90 (ILMI…TFFG), and 114–134 (ITLF…TVML).

Belongs to the CPA3 antiporters (TC 2.A.63) subunit B family. In terms of assembly, may form a heterooligomeric complex that consists of seven subunits: mnhA2, mnhB2, mnhC2, mnhD2, mnhE2, mnhF2 and mnhG2.

The protein localises to the cell membrane. The protein is Putative antiporter subunit mnhB2 (mnhB2) of Staphylococcus aureus (strain MRSA252).